We begin with the raw amino-acid sequence, 475 residues long: Aspartyl/glutamyl-tRNA(Asn/Gln) amidotransferase subunit B (475 aa).

This sequence belongs to the GatB/GatE family. GatB subfamily. In terms of assembly, heterotrimer of A, B and C subunits.

It catalyses the reaction L-glutamyl-tRNA(Gln) + L-glutamine + ATP + H2O = L-glutaminyl-tRNA(Gln) + L-glutamate + ADP + phosphate + H(+). The catalysed reaction is L-aspartyl-tRNA(Asn) + L-glutamine + ATP + H2O = L-asparaginyl-tRNA(Asn) + L-glutamate + ADP + phosphate + 2 H(+). Its function is as follows. Allows the formation of correctly charged Asn-tRNA(Asn) or Gln-tRNA(Gln) through the transamidation of misacylated Asp-tRNA(Asn) or Glu-tRNA(Gln) in organisms which lack either or both of asparaginyl-tRNA or glutaminyl-tRNA synthetases. The reaction takes place in the presence of glutamine and ATP through an activated phospho-Asp-tRNA(Asn) or phospho-Glu-tRNA(Gln). This chain is Aspartyl/glutamyl-tRNA(Asn/Gln) amidotransferase subunit B, found in Trichlorobacter lovleyi (strain ATCC BAA-1151 / DSM 17278 / SZ) (Geobacter lovleyi).